A 541-amino-acid chain; its full sequence is Chaperonin GroEL 2 (541 aa).

ATP-binding positions include 29 to 32 (TLGP), 86 to 90 (DGTTT), G413, 476 to 478 (NAA), and D492.

It belongs to the chaperonin (HSP60) family. As to quaternary structure, forms a cylinder of 14 subunits composed of two heptameric rings stacked back-to-back. Interacts with the co-chaperonin GroES.

The protein resides in the cytoplasm. It carries out the reaction ATP + H2O + a folded polypeptide = ADP + phosphate + an unfolded polypeptide.. Its function is as follows. Together with its co-chaperonin GroES, plays an essential role in assisting protein folding. The GroEL-GroES system forms a nano-cage that allows encapsulation of the non-native substrate proteins and provides a physical environment optimized to promote and accelerate protein folding. In Streptomyces avermitilis (strain ATCC 31267 / DSM 46492 / JCM 5070 / NBRC 14893 / NCIMB 12804 / NRRL 8165 / MA-4680), this protein is Chaperonin GroEL 2.